Consider the following 364-residue polypeptide: Probable tartrate dehydrogenase/decarboxylase TtuC (364 aa).

3 residues coordinate Mn(2+): Asp-222, Asp-246, and Asp-250.

The protein belongs to the isocitrate and isopropylmalate dehydrogenases family. It depends on Mg(2+) as a cofactor. Mn(2+) is required as a cofactor. The cofactor is K(+).

Its subcellular location is the cytoplasm. It carries out the reaction tartrate + NAD(+) = 2-hydroxy-3-oxosuccinate + NADH + H(+). The catalysed reaction is (2R,3S)-tartrate + NAD(+) = 2-hydroxy-3-oxosuccinate + NADH + H(+). The enzyme catalyses (2R,3R)-tartrate + NAD(+) = 2-hydroxy-3-oxosuccinate + NADH + H(+). It catalyses the reaction (2R,3R)-tartrate + H(+) = (R)-glycerate + CO2. It carries out the reaction (R)-malate + NAD(+) = pyruvate + CO2 + NADH. It participates in carbohydrate acid metabolism; tartrate degradation; 2-hydroxy-3-oxosuccinate from L-tartrate: step 1/1. It functions in the pathway carbohydrate acid metabolism; tartrate degradation; 2-hydroxy-3-oxosuccinate from meso-tartrate: step 1/1. The protein operates within carbohydrate acid metabolism; tartrate degradation; D-glycerate from L-tartrate: step 1/1. Has multiple catalytic activities. Apart from catalyzing the oxidation of (+)-tartrate to oxaloglycolate, also converts meso-tartrate to D-glycerate and catalyzes the oxidative decarboxylation of D-malate to pyruvate. This Agrobacterium vitis (Rhizobium vitis) protein is Probable tartrate dehydrogenase/decarboxylase TtuC (ttuC).